The primary structure comprises 169 residues: Lipoprotein signal peptidase (169 aa).

2 helical membrane passes run 59-79 and 84-104; these read PTVLLLLTGVITIMVLAYVIW and TTLFLLPFALITGGGIGNMID. Active-site residues include aspartate 113 and aspartate 139. Residues 132 to 152 form a helical membrane-spanning segment; that stretch reads WPIFNIADSAITIGACMLMIF.

This sequence belongs to the peptidase A8 family.

Its subcellular location is the cell inner membrane. It catalyses the reaction Release of signal peptides from bacterial membrane prolipoproteins. Hydrolyzes -Xaa-Yaa-Zaa-|-(S,diacylglyceryl)Cys-, in which Xaa is hydrophobic (preferably Leu), and Yaa (Ala or Ser) and Zaa (Gly or Ala) have small, neutral side chains.. Its pathway is protein modification; lipoprotein biosynthesis (signal peptide cleavage). Functionally, this protein specifically catalyzes the removal of signal peptides from prolipoproteins. The sequence is that of Lipoprotein signal peptidase from Pelodictyon phaeoclathratiforme (strain DSM 5477 / BU-1).